We begin with the raw amino-acid sequence, 439 residues long: Ectonucleotide pyrophosphatase/phosphodiesterase family member 7 (439 aa).

Residues 1-21 (MGHSAVLLCVALAILPACVTG) form the signal peptide. At 22 to 414 (APVQRQHKLL…ILRPMLRSGS (393 aa)) the chain is on the extracellular side. Zn(2+) is bound by residues aspartate 36 and threonine 72. Residues 69–75 (VTMTSPC) form a required for enzyme activity region. Threonine 72 (nucleophile) is an active-site residue. Residue asparagine 93 coordinates substrate. N-linked (GlcNAc...) asparagine glycans are attached at residues asparagine 97, asparagine 118, asparagine 143, and asparagine 165. The Zn(2+) site is built by aspartate 196, histidine 200, aspartate 243, and histidine 244. Asparagine 264 is a glycosylation site (N-linked (GlcNAc...) asparagine). A Zn(2+)-binding site is contributed by histidine 350. A helical membrane pass occupies residues 415-435 (ASLLSSQHHLVALLVGILTCL). The Cytoplasmic segment spans residues 436–439 (AKVL).

Requires Zn(2+) as cofactor. Post-translationally, N-glycosylated; required for activity and transport to the plasma membrane. In terms of tissue distribution, expressed in liver and small intestine.

The protein localises to the cell membrane. It catalyses the reaction a sphingomyelin + H2O = phosphocholine + an N-acylsphing-4-enine + H(+). It carries out the reaction a 1-O-alkyl-2-acetyl-sn-glycero-3-phosphocholine + H2O = a 1-O-alkyl-2-acetyl-sn-glycerol + phosphocholine + H(+). The enzyme catalyses 1-O-octadecyl-2-acetyl-sn-glycero-3-phosphocholine + H2O = 1-O-octadecyl-2-acetyl-sn-glycerol + phosphocholine + H(+). The catalysed reaction is 1-hexadecanoyl-sn-glycero-3-phosphocholine + H2O = 1-hexadecanoyl-sn-glycerol + phosphocholine + H(+). Choline-specific phosphodiesterase that hydrolyzes sphingomyelin releasing the ceramide and phosphocholine and therefore is involved in sphingomyelin digestion, ceramide formation, and fatty acid (FA) absorption in the gastrointestinal tract. Also has phospholipase C activity and can also cleave phosphocholine from palmitoyl lyso-phosphatidylcholine and platelet-activating factor (PAF) leading to its inactivation. Does not have nucleotide pyrophosphatase activity. May promote cholesterol absorption by affecting the levels of sphingomyelin derived from either diet or endogenous sources, in the intestinal lumen. This is Ectonucleotide pyrophosphatase/phosphodiesterase family member 7 from Mus musculus (Mouse).